Here is a 40-residue protein sequence, read N- to C-terminus: RapK inhibitor (40 aa).

2 consecutive propeptides follow at residues 1 to 34 (MKKL…IQVA) and Gly-40.

Belongs to the Phr family. Contains a predicted signal peptide cleavage site in the N-terminal region, however the propeptide is probably only subject to processing events at the ends of the mature peptide.

Its subcellular location is the secreted. The protein resides in the cytoplasm. Signaling molecule involved in the regulation of genetic competence development. Secreted during production, but the mature peptide acts intracellularly, indicating that it needs to be imported into the cell to function. Stimulates expression of the genes controlled by ComA, a transcriptional factor that regulates the development of genetic competence. Acts by inhibiting RapK, which regulates the activity of ComA. This is RapK inhibitor (phrK) from Bacillus subtilis (strain 168).